A 70-amino-acid polypeptide reads, in one-letter code: uncharacterized protein (70 aa).

To M.pneumoniae MPN377.

This is an uncharacterized protein from Ureaplasma parvum serovar 3 (strain ATCC 700970).